The following is a 238-amino-acid chain: Putative type I specificity subunit S.MpnORF201P (238 aa).

The protein belongs to the type-I restriction system S methylase family. The methyltransferase is composed of M and S polypeptides.

In terms of biological role, the specificity (S) subunit of a type I methyltransferase (MTase); this subunit dictates DNA sequence specificity. The single R subunit has multiple frameshifts and is probably not expressed. The protein is Putative type I specificity subunit S.MpnORF201P of Mycoplasma pneumoniae (strain ATCC 29342 / M129 / Subtype 1) (Mycoplasmoides pneumoniae).